The primary structure comprises 150 residues: Clitocypin (150 aa).

This sequence belongs to the protease inhibitor I48 family. Homodimer. Uniformly expressed throughout the mature fruiting body (at mRNA and protein level).

Binds and inhibits cysteine proteinases. Inhibits most strongly papain and cathepsin L, more weakly bromelain and cathepsin B while it is completely ineffective against cathepsin H. The protein is Clitocypin (Cnc1) of Clitocybe nebularis (Clouded agaric).